Consider the following 164-residue polypeptide: Endoribonuclease YbeY (164 aa).

The Zn(2+) site is built by histidine 111, histidine 115, and histidine 121. Residues glycine 142–glutamate 164 are disordered. Residues threonine 154–glutamate 164 show a composition bias toward polar residues.

It belongs to the endoribonuclease YbeY family. It depends on Zn(2+) as a cofactor.

The protein resides in the cytoplasm. Its function is as follows. Single strand-specific metallo-endoribonuclease involved in late-stage 70S ribosome quality control and in maturation of the 3' terminus of the 16S rRNA. This is Endoribonuclease YbeY from Pseudomonas fluorescens (strain Pf0-1).